Here is a 299-residue protein sequence, read N- to C-terminus: Probable adenylate kinase 7, mitochondrial (299 aa).

Residues 1–25 constitute a mitochondrion transit peptide; that stretch reads MAGVLRLAGAARSPLARALAPAARR. ATP is bound at residue 80–85; that stretch reads GPQKHA. The segment at 100 to 129 is NMP; it reads SMGTLVRQELSPASSLYKKIANSVNEGKLV. Residues arginine 106, 127–129, 157–160, and glutamine 164 each bind AMP; these read KLV and GIPR. ATP is bound by residues arginine 190 and 203–204; that span reads LF. Positions 193-237 are LID; the sequence is GGDICPHCGQLFDFSKTASSDRNPSLGSCTWPSQVQHAAVLGLED.

This sequence belongs to the adenylate kinase family.

Its subcellular location is the mitochondrion. The enzyme catalyses AMP + ATP = 2 ADP. Functionally, catalyzes the reversible transfer of the terminal phosphate group between ATP and AMP. Plays an important role in cellular energy homeostasis and in adenine nucleotide metabolism. The protein is Probable adenylate kinase 7, mitochondrial of Oryza sativa subsp. japonica (Rice).